The chain runs to 579 residues: General transcription and DNA repair factor IIH subunit TFB1-3 (579 aa).

2 consecutive BSD domains span residues 107-161 and 186-238; these read LTPA…GKDS and RTNR…YLYS.

This sequence belongs to the TFB1 family. In terms of assembly, component of the 7-subunit TFIIH core complex composed of XPB, XPD, TFB1/GTF2H1, GTF2H2/P44, TFB4/GTF2H3, TFB2/GTF2H4 and TFB5/GTF2H5, which is active in NER. The core complex associates with the 3-subunit CDK-activating kinase (CAK) module composed of CYCH1/cyclin H1, CDKD and MAT1/At4g30820 to form the 10-subunit holoenzyme (holo-TFIIH) active in transcription.

It localises to the nucleus. Functionally, component of the general transcription and DNA repair factor IIH (TFIIH) core complex, which is involved in general and transcription-coupled nucleotide excision repair (NER) of damaged DNA and, when complexed to CAK, in RNA transcription by RNA polymerase II. In NER, TFIIH acts by opening DNA around the lesion to allow the excision of the damaged oligonucleotide and its replacement by a new DNA fragment. In transcription, TFIIH has an essential role in transcription initiation. When the pre-initiation complex (PIC) has been established, TFIIH is required for promoter opening and promoter escape. Phosphorylation of the C-terminal tail (CTD) of the largest subunit of RNA polymerase II by the kinase module CAK controls the initiation of transcription. This is General transcription and DNA repair factor IIH subunit TFB1-3 from Arabidopsis thaliana (Mouse-ear cress).